Reading from the N-terminus, the 308-residue chain is Acetaldehyde dehydrogenase (308 aa).

NAD(+) is bound at residue 10 to 13 (SGNI). Cys-128 acts as the Acyl-thioester intermediate in catalysis. Residues 159–167 (SAGPGTRAN) and Asn-285 contribute to the NAD(+) site.

This sequence belongs to the acetaldehyde dehydrogenase family.

It catalyses the reaction acetaldehyde + NAD(+) + CoA = acetyl-CoA + NADH + H(+). This Salinispora tropica (strain ATCC BAA-916 / DSM 44818 / JCM 13857 / NBRC 105044 / CNB-440) protein is Acetaldehyde dehydrogenase.